The following is a 501-amino-acid chain: Nucleic-acid-binding protein from transposon X-element (501 aa).

Disordered regions lie at residues 20-71 and 105-128; these read SSPQ…GNSN and AAAKRDAASAGTTSSAKRAQSKPP. The segment at 285–302 adopts a CCHC-type zinc-finger fold; it reads VQCHRCQQIGHTAKYCRK. Disordered stretches follow at residues 353–385 and 400–443; these read RPRSGVAGRTEVSDRPTPRGLAGGKEIPSSRGG and QPMS…TDAS. The span at 407 to 422 shows a compositional bias: low complexity; sequence QQQKQKQQPYDGSPSR. The span at 434–443 shows a compositional bias: polar residues; sequence GTLQRSTDAS.

It is found in the virion. Its function is as follows. Strongly basic protein that binds directly to retroviral RNA and may be involved in its packaging and in the reverse transcription process. The chain is Nucleic-acid-binding protein from transposon X-element from Drosophila melanogaster (Fruit fly).